A 542-amino-acid polypeptide reads, in one-letter code: Zinc finger CCHC domain-containing protein 7 (542 aa).

Residues 110 to 144 (QAQEKTQSPATPRSNKVANKCKRSNKKPEPEESPS) form a disordered region. Residues 112–126 (QEKTQSPATPRSNKV) are compositionally biased toward polar residues. Residues Lys-129 and Lys-136 each participate in a glycyl lysine isopeptide (Lys-Gly) (interchain with G-Cter in SUMO2) cross-link. Residue Ser-142 is modified to Phosphoserine. Glycyl lysine isopeptide (Lys-Gly) (interchain with G-Cter in SUMO2) cross-links involve residues Lys-236 and Lys-251. 3 CCHC-type zinc fingers span residues 238-255 (VTCRNCDKRGHLSKNCPL), 260-277 (RPCCLCSERGHLQYGCPA), and 301-318 (KRCDRCDMIGHYADACPE). Lys-336 is covalently cross-linked (Glycyl lysine isopeptide (Lys-Gly) (interchain with G-Cter in SUMO2)). Residues 345-362 (VYCYNCAQKGHYGHECTE) form a CCHC-type 4 zinc finger. The tract at residues 396–542 (LKDIKKNGDF…RKKKPKSSGF (147 aa)) is disordered. Residue Lys-410 forms a Glycyl lysine isopeptide (Lys-Gly) (interchain with G-Cter in SUMO2) linkage. The segment covering 412–421 (PHGEETDRYH) has biased composition (basic and acidic residues). A compositionally biased stretch (basic residues) spans 422–435 (HDRRKSRFSGKRSR). Residue Lys-432 forms a Glycyl lysine isopeptide (Lys-Gly) (interchain with G-Cter in SUMO2) linkage. Over residues 436-456 (WPRESKETQKEKTRGREGEKH) the composition is skewed to basic and acidic residues. Lys-474 is covalently cross-linked (Glycyl lysine isopeptide (Lys-Gly) (interchain with G-Cter in SUMO2)). Residues 474-489 (KPNSSSSSNSQKPSKS) are compositionally biased toward low complexity. Phosphoserine occurs at positions 478 and 480. Residues Lys-485 and Lys-488 each participate in a glycyl lysine isopeptide (Lys-Gly) (interchain with G-Cter in SUMO2) cross-link. Basic and acidic residues-rich tracts occupy residues 499–510 (LREEKLRRESMR) and 518–528 (FVEDGSHDDLF). A Glycyl lysine isopeptide (Lys-Gly) (interchain with G-Cter in SUMO2) cross-link involves residue Lys-531. Residues 531–542 (KQRKKKPKSSGF) show a composition bias toward basic residues.

Component of a nucleolar TRAMP-like complex, an ATP-dependent exosome regulatory complex consisting of a helicase (MTREX), an oligadenylate polymerase (TENT4B or TENT4A), and a substrate specific RNA-binding factor (ZCCHC7 or ZCCHC8). Several TRAMP-like complexes exist with specific compositions and are associated with nuclear, or nucleolar RNA exosomes.

The protein localises to the nucleus. Its subcellular location is the nucleolus. This is Zinc finger CCHC domain-containing protein 7 (Zcchc7) from Rattus norvegicus (Rat).